Reading from the N-terminus, the 465-residue chain is Adenosylhomocysteinase (465 aa).

Threonine 56, aspartate 131, and glutamate 191 together coordinate substrate. 192–194 (TTT) is an NAD(+) binding site. 2 residues coordinate substrate: lysine 221 and aspartate 225. NAD(+) is bound by residues asparagine 226, 255-260 (GYGDVG), glutamate 278, asparagine 313, 334-336 (IGH), and asparagine 379.

The protein belongs to the adenosylhomocysteinase family. NAD(+) serves as cofactor.

Its subcellular location is the cytoplasm. It catalyses the reaction S-adenosyl-L-homocysteine + H2O = L-homocysteine + adenosine. The protein operates within amino-acid biosynthesis; L-homocysteine biosynthesis; L-homocysteine from S-adenosyl-L-homocysteine: step 1/1. Its function is as follows. May play a key role in the regulation of the intracellular concentration of adenosylhomocysteine. This chain is Adenosylhomocysteinase, found in Bartonella tribocorum (strain CIP 105476 / IBS 506).